The chain runs to 444 residues: NADH-quinone oxidoreductase subunit F (444 aa).

61–70 (GRGGAGFSTG) is an NAD(+) binding site. Position 176-223 (176-223 (GAGRYICGEETALINSLEGRRANPRSKPPFPAVFGLWGKPTCVNNVET)) interacts with FMN. 4 residues coordinate [4Fe-4S] cluster: cysteine 353, cysteine 356, cysteine 359, and cysteine 400.

Belongs to the complex I 51 kDa subunit family. In terms of assembly, composed of 13 different subunits. Subunits NuoCD, E, F, and G constitute the peripheral sector of the complex. The cofactor is FMN. Requires [4Fe-4S] cluster as cofactor.

It carries out the reaction a quinone + NADH + 5 H(+)(in) = a quinol + NAD(+) + 4 H(+)(out). Its function is as follows. NDH-1 shuttles electrons from NADH, via FMN and iron-sulfur (Fe-S) centers, to quinones in the respiratory chain. Couples the redox reaction to proton translocation (for every two electrons transferred, four hydrogen ions are translocated across the cytoplasmic membrane), and thus conserves the redox energy in a proton gradient. The protein is NADH-quinone oxidoreductase subunit F (nuoF) of Buchnera aphidicola subsp. Acyrthosiphon pisum (strain APS) (Acyrthosiphon pisum symbiotic bacterium).